The sequence spans 331 residues: Inactive serine/threonine-protein kinase BKN1 (331 aa).

Gly-2 carries N-myristoyl glycine lipidation. Cys-4 carries the S-palmitoyl cysteine lipid modification. One can recognise a Protein kinase domain in the interval 58 to 328 (DYSVRKFYKG…VLDGLNHIAE (271 aa)).

This sequence belongs to the protein kinase superfamily. Ser/Thr protein kinase family. Restricted to stigma in flowers.

The protein localises to the cell membrane. Its subcellular location is the nucleus. Collaboratively with BKN2/SZE2, involved in compatible pollen-stigma interactions. The sequence is that of Inactive serine/threonine-protein kinase BKN1 from Arabidopsis thaliana (Mouse-ear cress).